The sequence spans 2111 residues: Glutamate synthase [NADH] (2111 aa).

The active-site Nucleophile is Cys-69. The Glutamine amidotransferase type-2 domain occupies 69 to 469 (CGVGFTCHIK…PGRMLLVDTK (401 aa)). The disordered stretch occupies residues 969–990 (GGKSNTGEGGEDPARSQRLANG). 1139–1191 (VAETHQTLVLNDLRGRVVIQTDGQIRTGRDVAIACLLGAEEWGFATTPLIALG) contributes to the FMN binding site. [3Fe-4S] cluster contacts are provided by Cys-1192, Cys-1198, and Cys-1203.

The protein belongs to the glutamate synthase family. In terms of assembly, homotrimer. Requires [3Fe-4S] cluster as cofactor. FAD is required as a cofactor. It depends on FMN as a cofactor.

The protein localises to the cytoplasm. It carries out the reaction 2 L-glutamate + NAD(+) = L-glutamine + 2-oxoglutarate + NADH + H(+). It functions in the pathway amino-acid biosynthesis; L-glutamate biosynthesis via GLT pathway; L-glutamate from 2-oxoglutarate and L-glutamine (NAD(+) route): step 1/1. The protein operates within energy metabolism; nitrogen metabolism. With respect to regulation, in the presence of 10 mM allantoin, the activity is reduced more than 25%. Forms L-glutamate from L-glutamine and 2-oxoglutarate. Represents an alternative pathway to L-glutamate dehydrogenase for the biosynthesis of L-glutamate. Participates with glutamine synthetase in ammonia assimilation processes. The enzyme is specific for NADH, L-glutamine and 2-oxoglutarate. This Schizosaccharomyces pombe (strain 972 / ATCC 24843) (Fission yeast) protein is Glutamate synthase [NADH] (glt1).